A 435-amino-acid polypeptide reads, in one-letter code: Sex peptide receptor (435 aa).

Residues 1-93 (MDNYTDVLYQ…PLEYAMPLYG (93 aa)) lie on the Extracellular side of the membrane. A helical membrane pass occupies residues 94-114 (YCMPFLLIITIISNSLIVLVL). The Cytoplasmic portion of the chain corresponds to 115 to 124 (SKKSMATPTN). The chain crosses the membrane as a helical span at residues 125-145 (FVLMGMAICDMLTVIFPAPGL). Topologically, residues 146-168 (WYMYTFGNHYKPLHPVSMCLAYS) are extracellular. The chain crosses the membrane as a helical span at residues 169 to 189 (IFNEIMPAMCHTISVWLTLAL). The Cytoplasmic segment spans residues 190 to 211 (AVQRYIYVCHAPMARTWCTMPR). A helical membrane pass occupies residues 212–229 (VRRCTAYIALLAFLHQLP). The Extracellular segment spans residues 230-276 (RFFDRTYMPLVIEWNGSPTEVCHLETSMWVHDYIGVDLYYTSYYLFR). A helical transmembrane segment spans residues 277-297 (VLFVHLLPCIILVTLNILLFA). The Cytoplasmic segment spans residues 298 to 327 (AMRQAQERRKLLFRENRKKECKKLRETNCT). Residues 328-348 (TLMLIVVVSVFLLAEIPIAVV) form a helical membrane-spanning segment. At 349 to 368 (TAMHIVSSLIIEFLDYGLAN) the chain is on the extracellular side. A helical membrane pass occupies residues 369-389 (ICIMLTNFFLVFSYPINFGIY). At 390–435 (CGMSRQFRETFKEIFLGRLMAKKDSSTKYSIVNGARTCTNTNETVL) the chain is on the cytoplasmic side.

It belongs to the G-protein coupled receptor 1 family. In the female, expressed in the reproductive organs; strongly expressed in the spermathecae and the lower oviduct. No expression in the male reproductive organs. In the central nervous system of both sexes, it is expressed in the brain and ventral nerve cord (VNC); strongly expressed in the ventral regions of the suboesophageal ganglion, the cervical connective and in many nerve roots of the brain and VNC. Expressed in the s-LNvs and l-LNvs pdf neurons (at protein level).

The protein localises to the cell membrane. Its function is as follows. Receptor for two functionally unrelated ligands; SP (A70A) for controlling reproductive behaviors and MIP for controlling sleep behavior. MIP-SPR pathway functions as a sleep homeostat which perceives the need for sleep and stabilizes it by providing a slow-acting inhibitory input to the fly arousal system that involve the pigment dispersing factor (pdf) neurons. SP-SPR is one of the multiple SP pathways that induce female post-mating behavioral responses (PMR) such as the suppression of mating receptivity and initiation of egg laying. The PMR switch is achieved by mediating the synaptic output of neurons such as those expressing fruitless (fru), double sex (dsx) and pickpocket (ppk). This Drosophila melanogaster (Fruit fly) protein is Sex peptide receptor.